The following is a 94-amino-acid chain: Putative regulatory protein Tmel_0100 (94 aa).

It belongs to the RemA family.

The chain is Putative regulatory protein Tmel_0100 from Thermosipho melanesiensis (strain DSM 12029 / CIP 104789 / BI429).